The sequence spans 1403 residues: DNA-directed RNA polymerase subunit beta' (1403 aa).

Zn(2+) contacts are provided by Cys-70, Cys-72, Cys-85, and Cys-88. Residues Asp-460, Asp-462, and Asp-464 each coordinate Mg(2+). Residues Cys-814, Cys-888, Cys-895, and Cys-898 each coordinate Zn(2+). Residues 1369–1403 (RRKRRMLEQPESLTADTGTSHYGEDEISESGAATA) form a disordered region. Positions 1379-1388 (ESLTADTGTS) are enriched in polar residues.

The protein belongs to the RNA polymerase beta' chain family. The RNAP catalytic core consists of 2 alpha, 1 beta, 1 beta' and 1 omega subunit. When a sigma factor is associated with the core the holoenzyme is formed, which can initiate transcription. It depends on Mg(2+) as a cofactor. Zn(2+) is required as a cofactor.

It catalyses the reaction RNA(n) + a ribonucleoside 5'-triphosphate = RNA(n+1) + diphosphate. In terms of biological role, DNA-dependent RNA polymerase catalyzes the transcription of DNA into RNA using the four ribonucleoside triphosphates as substrates. This is DNA-directed RNA polymerase subunit beta' from Nitrosococcus oceani (strain ATCC 19707 / BCRC 17464 / JCM 30415 / NCIMB 11848 / C-107).